We begin with the raw amino-acid sequence, 1181 residues long: Pesticidal crystal protein Cry1Ae (1181 aa).

The protein belongs to the delta endotoxin family.

Functionally, promotes colloidosmotic lysis by binding to the midgut epithelial cells of many lepidopteran larvae. In Bacillus thuringiensis subsp. alesti, this protein is Pesticidal crystal protein Cry1Ae (cry1Ae).